We begin with the raw amino-acid sequence, 434 residues long: Nuclear receptor subfamily 1 group I member 2 (434 aa).

Residues 38–107 (PQICRVCGDK…RLRKCLESGM (70 aa)) constitute a DNA-binding region (nuclear receptor). NR C4-type zinc fingers lie at residues 41–61 (CRVC…CEGC) and 77–102 (CPFR…LRKC). Positions 66–92 (RRAMKRNARLRCPFRKGACEITRKTRR) match the Bipartite nuclear localization signal motif. Positions 108 to 145 (KKEMIMSDAAVEERRALIKRKKRERIGTQPPGVQGLTE) are hinge. Residues 146–433 (EQRMMIRELM…LMQELFGITG (288 aa)) enclose the NR LBD domain. Hyperforin contacts are provided by residues Ser-247, 285–288 (QLRF), and His-407.

The protein belongs to the nuclear hormone receptor family. NR1 subfamily. As to quaternary structure, heterodimer with RXRA. Interacts with NCOA1. Interacts (via domain NR LBD) with CRY1 and CRY2 in a ligand-dependent manner.

The protein localises to the nucleus. Its function is as follows. Nuclear receptor that binds and is activated by a variety of endogenous and xenobiotic compounds. Transcription factor that activates the transcription of multiple genes involved in the metabolism and secretion of potentially harmful xenobiotics, endogenous compounds and drugs. Response to specific ligands is species-specific, due to differences in the ligand-binding domain. Activated by naturally occurring steroids, such as pregnenolone and progesterone. Binds to a response element in the promoters of the CYP3A4 and ABCB1/MDR1 genes. In Macaca mulatta (Rhesus macaque), this protein is Nuclear receptor subfamily 1 group I member 2 (NR1I2).